The following is a 442-amino-acid chain: D-serine dehydratase (442 aa).

Lys118 is modified (N6-(pyridoxal phosphate)lysine).

It belongs to the serine/threonine dehydratase family. DsdA subfamily. Monomer. Pyridoxal 5'-phosphate serves as cofactor.

It catalyses the reaction D-serine = pyruvate + NH4(+). This Escherichia coli O139:H28 (strain E24377A / ETEC) protein is D-serine dehydratase.